The chain runs to 1809 residues: Pyochelin synthetase PchF (1809 aa).

Residues 69–490 (FPLTPVQAAY…GLLRRLAQSP (422 aa)) are condensation/cyclization. The adenylation stretch occupies residues 520 to 915 (FAERALLTPD…GREDDQVKIR (396 aa)). A Carrier domain is found at 1407 to 1488 (APADELENAL…GLAERLRSAP (82 aa)). Position 1442 is an O-(pantetheine 4'-phosphoryl)serine (serine 1442). The interval 1584–1797 (LGRRYAEALH…FDCLGEALAQ (214 aa)) is thioesterase.

Belongs to the NRP synthetase family. Requires pantetheine 4'-phosphate as cofactor.

It catalyses the reaction holo-[peptidyl-carrier protein] + L-cysteine + ATP = L-cysteinyl-[peptidyl-carrier protein] + AMP + diphosphate. It functions in the pathway siderophore biosynthesis. Its function is as follows. Involved in the biosynthesis of the siderophore pyochelin. Adenylates L-cysteine and loads it onto its peptidyl carrier domain via a thioester linkage to the phosphopanthetheine moiety. Then forms a peptide bond between the salicyl-thiazolinyl intermediate bound to the second carrier domain of PchE and the cysteine bound to its own peptidyl carrier domain to form the salicyl-thiazolinyl-cysteinyl-S-PCP2 intermediate. It subsequently cyclizes the C-terminal cysteine to form the second thiazoline heterocycle in the salicyl-thiazolinyl-thiazolinyl-S-PCP2 intermediate. When this intermediate is released by the action of a thioesterase, it produces the tricyclic acid hydroxyphenyl-thiazolyl-thiazolinyl-carboxylic acid (HPTT-COOH), an advanced intermediate containing the aryl-4,2-bis-heterocyclic skeleton of the bithiazoline class of siderophores. The polypeptide is Pyochelin synthetase PchF (Pseudomonas aeruginosa (strain ATCC 15692 / DSM 22644 / CIP 104116 / JCM 14847 / LMG 12228 / 1C / PRS 101 / PAO1)).